Reading from the N-terminus, the 245-residue chain is tRNA pseudouridine synthase A (245 aa).

The Nucleophile role is filled by D52. Y111 provides a ligand contact to substrate.

This sequence belongs to the tRNA pseudouridine synthase TruA family. Homodimer.

It carries out the reaction uridine(38/39/40) in tRNA = pseudouridine(38/39/40) in tRNA. Formation of pseudouridine at positions 38, 39 and 40 in the anticodon stem and loop of transfer RNAs. The polypeptide is tRNA pseudouridine synthase A (Ehrlichia canis (strain Jake)).